Reading from the N-terminus, the 1202-residue chain is Putative late blight resistance protein homolog R1B-8 (1202 aa).

Coiled coils occupy residues 345 to 368 (RYSDSLAFLKNQLQVIQTEFESLQ) and 437 to 459 (LRMNEEIVGFEDVIEKLRNRLLN). An NB-ARC domain is found at 426-741 (IARTSSQLAR…ISESFIKSCE (316 aa)). ATP is bound at residue 471–478 (GMPGLGKT). 7 LRR repeats span residues 865-889 (FKFLKVLDLEHQVIIDFIPTELFYL), 908-936 (LWNLETLILKSRSASKHNRVLLPSTVWDM), 1011-1036 (PIRLEILKLYNRSKAFKTIPFCISAP), 1040-1059 (YLKLSRFYLDSQYLSETADH), 1060-1084 (LKHLEVLKLSCVEFGDHGEWEVSNG), 1086-1111 (FPQLKILKLEYVSLMKWIVADDVFPN), and 1128-1151 (SCFMDILSLKYIKVDEYSESVVQS).

Belongs to the disease resistance NB-LRR family.

Its subcellular location is the cytoplasm. It is found in the membrane. In terms of biological role, confers resistance to late blight (Phytophthora infestans) races carrying the avirulence gene Avr1. Resistance proteins guard the plant against pathogens that contain an appropriate avirulence protein via an indirect interaction with this avirulence protein. That triggers a defense system including the hypersensitive response, which restricts the pathogen growth. This chain is Putative late blight resistance protein homolog R1B-8 (R1B-8), found in Solanum demissum (Wild potato).